The chain runs to 362 residues: Resuscitation-promoting factor RpfB (362 aa).

The N-terminal stretch at methionine 1 to alanine 22 is a signal peptide. One can recognise a G5 domain in the interval valine 192 to proline 272.

Belongs to the transglycosylase family. Rpf subfamily.

Its function is as follows. Factor that stimulates resuscitation of dormant cells. Has peptidoglycan (PG) hydrolytic activity. Active in the pM concentration range. Has little to no effect on actively-growing cells. PG fragments could either directly activate the resuscitation pathway of dormant bacteria or serve as a substrate for endogenous Rpf, resulting in low molecular weight products with resuscitation activity. This is Resuscitation-promoting factor RpfB (rpfB) from Mycolicibacterium smegmatis (strain ATCC 700084 / mc(2)155) (Mycobacterium smegmatis).